Here is a 140-residue protein sequence, read N- to C-terminus: Chorion class A protein Ld2/Ld41 (140 aa).

The signal sequence occupies residues 1-21 (MNSFALLLVCIQACLVQSVFS).

Belongs to the chorion protein family.

This protein is one of many from the eggshell of the gypsy moth. This is Chorion class A protein Ld2/Ld41 from Lymantria dispar (Gypsy moth).